The sequence spans 742 residues: 5-methyltetrahydropteroyltriglutamate--homocysteine methyltransferase (742 aa).

Residues 18 to 21 (REWK) and Lys-112 contribute to the 5-methyltetrahydropteroyltri-L-glutamate site. Residues 420 to 422 (IGS) and Glu-473 contribute to the L-homocysteine site. Residues 420–422 (IGS) and Glu-473 each bind L-methionine. A 5-methyltetrahydropteroyltri-L-glutamate-binding site is contributed by Trp-550. Asp-588 contacts L-homocysteine. Asp-588 lines the L-methionine pocket. Glu-594 contributes to the 5-methyltetrahydropteroyltri-L-glutamate binding site. Zn(2+) is bound by residues His-630, Cys-632, and Glu-654. The Proton donor role is filled by His-683. Zn(2+) is bound at residue Cys-715.

The protein belongs to the vitamin-B12 independent methionine synthase family. Requires Zn(2+) as cofactor.

It catalyses the reaction 5-methyltetrahydropteroyltri-L-glutamate + L-homocysteine = tetrahydropteroyltri-L-glutamate + L-methionine. The protein operates within amino-acid biosynthesis; L-methionine biosynthesis via de novo pathway; L-methionine from L-homocysteine (MetE route): step 1/1. Catalyzes the transfer of a methyl group from 5-methyltetrahydrofolate to homocysteine resulting in methionine formation. This is 5-methyltetrahydropteroyltriglutamate--homocysteine methyltransferase from Staphylococcus aureus (strain USA300).